Reading from the N-terminus, the 356-residue chain is tRNA N6-adenosine threonylcarbamoyltransferase (356 aa).

The Fe cation site is built by histidine 115 and histidine 119. Residues 138 to 142 (LVSGG), aspartate 171, glycine 184, and asparagine 283 each bind substrate. Fe cation is bound at residue aspartate 311.

This sequence belongs to the KAE1 / TsaD family. Requires Fe(2+) as cofactor.

It localises to the cytoplasm. The enzyme catalyses L-threonylcarbamoyladenylate + adenosine(37) in tRNA = N(6)-L-threonylcarbamoyladenosine(37) in tRNA + AMP + H(+). In terms of biological role, required for the formation of a threonylcarbamoyl group on adenosine at position 37 (t(6)A37) in tRNAs that read codons beginning with adenine. Is involved in the transfer of the threonylcarbamoyl moiety of threonylcarbamoyl-AMP (TC-AMP) to the N6 group of A37, together with TsaE and TsaB. TsaD likely plays a direct catalytic role in this reaction. In Prochlorococcus marinus (strain MIT 9515), this protein is tRNA N6-adenosine threonylcarbamoyltransferase.